Reading from the N-terminus, the 331-residue chain is UDP-galactose/UDP-glucose transporter 3 (331 aa).

8 consecutive transmembrane segments (helical) span residues 11–31 (VLLLSFCVAGIWAAYIYQGIL), 49–69 (HLAFLNLAQNVICLVWSYIMI), 80–100 (APWWTYWSAGITNTIGPAMGI), 112–132 (VLAKSSKMIPVMLMGSLVYGI), 135–155 (TLPEYLCTFLVAGGVSMFALL), 170–190 (APLGYGLCFLNLAFDGFTNAT), 206–226 (IMLGMNLWGTIYNMVYMFGLP), and 245–265 (WDILMYCLCGAVGQNFIFLTI). Positions 327–331 (KKKKA) match the Di-lysine motif motif.

The protein belongs to the nucleotide-sugar transporter family. UDP-galactose:UMP antiporter (TC 2.A.7.11) subfamily. As to expression, mostly expressed in flowers, and, to a lower extent, in roots, stems and leaves.

The protein localises to the endoplasmic reticulum membrane. The protein resides in the golgi apparatus membrane. In terms of biological role, essential sugar transporter required for the transport of UDP-glucose from the cytoplasm into the Golgi and the endoplasmic reticulum. Essential for pollen development and involved in embryo sac progress. The protein is UDP-galactose/UDP-glucose transporter 3 of Arabidopsis thaliana (Mouse-ear cress).